We begin with the raw amino-acid sequence, 609 residues long: Glutamine--fructose-6-phosphate aminotransferase [isomerizing] (609 aa).

Cys-2 (nucleophile; for GATase activity) is an active-site residue. One can recognise a Glutamine amidotransferase type-2 domain in the interval 2–217 (CGIVGAIAGR…EGDTAELRRD (216 aa)). 2 consecutive SIS domains span residues 284 to 425 (TADA…LQGR) and 458 to 599 (WAER…VDKP). Lys-604 functions as the For Fru-6P isomerization activity in the catalytic mechanism.

Homodimer.

It localises to the cytoplasm. The enzyme catalyses D-fructose 6-phosphate + L-glutamine = D-glucosamine 6-phosphate + L-glutamate. Functionally, catalyzes the first step in hexosamine metabolism, converting fructose-6P into glucosamine-6P using glutamine as a nitrogen source. The sequence is that of Glutamine--fructose-6-phosphate aminotransferase [isomerizing] from Xanthomonas campestris pv. campestris (strain ATCC 33913 / DSM 3586 / NCPPB 528 / LMG 568 / P 25).